Consider the following 131-residue polypeptide: DNA-directed RNA polymerases I, II, and III subunit RPABC2 (131 aa).

A disordered region spans residues 1 to 24 (MDDADYDNDDVGGDDFDDVDEDVD).

The protein belongs to the archaeal Rpo6/eukaryotic RPB6 RNA polymerase subunit family. In terms of assembly, component of the RNA polymerase I (Pol I), RNA polymerase II (Pol II) and RNA polymerase III (Pol III) complexes consisting of at least 13, 12 and 17 subunits, respectively.

The protein localises to the nucleus. In terms of biological role, DNA-dependent RNA polymerases catalyze the transcription of DNA into RNA using the four ribonucleoside triphosphates as substrates. Common component of RNA polymerases I, II and III which synthesize ribosomal RNA precursors, mRNA precursors and many functional non-coding RNAs, and small RNAs, such as 5S rRNA and tRNAs, respectively. Pol II is the central component of the basal RNA polymerase II transcription machinery. Pols are composed of mobile elements that move relative to each other. In Pol II, Polr2F/RPB6 is part of the clamp element and together with parts of Polr2A/RPB1 and RPB2 forms a pocket to which the Polr2D/RPB4-Polr2G/RPB7 subcomplex binds. The protein is DNA-directed RNA polymerases I, II, and III subunit RPABC2 of Drosophila melanogaster (Fruit fly).